The following is a 211-amino-acid chain: SAGA-associated factor 11 homolog (211 aa).

Residues 115-136 (CTCPHCDRLVAAARFAPHLEKC) form an SGF11-type zinc finger. Residues 153-211 (TKEGASASSSSTSTYIQSGGNTGGTDDEDDVDWSSDKRKKKSTQNSRNNGSKKNNGKIF) form a disordered region. A compositionally biased stretch (low complexity) spans 157 to 166 (ASASSSSTST). Serine 187 carries the phosphoserine modification. Over residues 197-211 (NSRNNGSKKNNGKIF) the composition is skewed to low complexity.

This sequence belongs to the SGF11 family. In terms of assembly, component of some SAGA transcription coactivator-HAT complexes, at least composed of Ada2b, not/nonstop, Pcaf/Gcn5, Sgf11 and Spt3. Within the SAGA complex, Sgf11, e(y)2, and not/nonstop form an additional subcomplex of SAGA called the DUB module (deubiquitination module). Interacts directly with not/nonstop. Interacts with the AMEX complex component xmas-2. Interacts with Cbp80; important for promoter recruitment of Sgf11 that is not associated with the DUB module.

The protein localises to the nucleus. It localises to the nucleoplasm. Its subcellular location is the cytoplasm. Its function is as follows. Component of the transcription regulatory histone acetylation (HAT) complex SAGA, a multiprotein complex that activates transcription by remodeling chromatin and mediating histone acetylation and deubiquitination. Within the SAGA complex, participates in a subcomplex that specifically deubiquitinates histone H2B. The SAGA complex is recruited to specific gene promoters by activators, where it is required for transcription. Required for nuclear receptor-mediated transactivation. Binds independently on SAGA to promoters in an RNA-dependent manner. Binds to mRNA and is essential for total mRNA export from the nucleus. Required to counteract heterochromatin silencing. Controls the development of neuronal connectivity in visual system by being required for accurate axon targeting in the optic lobe. Required for expression of ecdysone-induced genes such as br/broad. This Drosophila mojavensis (Fruit fly) protein is SAGA-associated factor 11 homolog.